The primary structure comprises 251 residues: Ubiquitin-conjugating enzyme E2 6 (251 aa).

The Cytoplasmic portion of the chain corresponds to 1 to 229 (MASIQANKRL…DQDKNPGENS (229 aa)). In terms of domain architecture, UBC core spans 5–154 (QANKRLTKEY…YSNFKFKNMF (150 aa)). C87 acts as the Glycyl thioester intermediate in catalysis. The segment covering 173–185 (AESKGAQQEENKA) has biased composition (basic and acidic residues). The tract at residues 173–200 (AESKGAQQEENKAQKLATEKATSLDDIS) is disordered. Residues 230–250 (NIKSLLCLILAIAIFFVGLIM) form a helical membrane-spanning segment.

The protein belongs to the ubiquitin-conjugating enzyme family.

The protein localises to the endoplasmic reticulum membrane. The enzyme catalyses S-ubiquitinyl-[E1 ubiquitin-activating enzyme]-L-cysteine + [E2 ubiquitin-conjugating enzyme]-L-cysteine = [E1 ubiquitin-activating enzyme]-L-cysteine + S-ubiquitinyl-[E2 ubiquitin-conjugating enzyme]-L-cysteine.. The protein operates within protein modification; protein ubiquitination. In terms of biological role, catalyzes the covalent attachment of ubiquitin to other proteins. Functions in degradation of misfolded or regulated proteins localized in the endoplasmic reticulum (ER) lumen or membrane via the ubiquitin-proteasome system. Cognate E2 conjugating enzyme for the DOA10 ubiquitin ligase complex, which is part of the ERAD-C pathway responsible for the rapid degradation of membrane proteins with misfolded cytoplasmic domains. This Kluyveromyces lactis (strain ATCC 8585 / CBS 2359 / DSM 70799 / NBRC 1267 / NRRL Y-1140 / WM37) (Yeast) protein is Ubiquitin-conjugating enzyme E2 6 (UBC6).